Here is a 130-residue protein sequence, read N- to C-terminus: Small ribosomal subunit protein uS8 (130 aa).

This sequence belongs to the universal ribosomal protein uS8 family. In terms of assembly, part of the 30S ribosomal subunit.

Its function is as follows. One of the primary rRNA binding proteins, it binds directly to 16S rRNA central domain where it helps coordinate assembly of the platform of the 30S subunit. The chain is Small ribosomal subunit protein uS8 from Pyrobaculum calidifontis (strain DSM 21063 / JCM 11548 / VA1).